The primary structure comprises 658 residues: UvrABC system protein B (658 aa).

The Helicase ATP-binding domain occupies 25–178; that stretch reads KSLKNKNHYQ…KSFLLKLVEM (154 aa). 38 to 45 is an ATP binding site; that stretch reads GVTGSGKT. Residues 91–114 carry the Beta-hairpin motif; sequence HFDYYQPESYIPRRDLFIEKDSSI. In terms of domain architecture, Helicase C-terminal spans 433 to 607; that stretch reads QVQDLFDEIK…ELKLRDDETK (175 aa). A UVR domain is found at 623-658; that stretch reads EKIIKELDKKMRECAKNLDFEEAMHLRDEIAKLRTL.

This sequence belongs to the UvrB family. Forms a heterotetramer with UvrA during the search for lesions. Interacts with UvrC in an incision complex.

It is found in the cytoplasm. The UvrABC repair system catalyzes the recognition and processing of DNA lesions. A damage recognition complex composed of 2 UvrA and 2 UvrB subunits scans DNA for abnormalities. Upon binding of the UvrA(2)B(2) complex to a putative damaged site, the DNA wraps around one UvrB monomer. DNA wrap is dependent on ATP binding by UvrB and probably causes local melting of the DNA helix, facilitating insertion of UvrB beta-hairpin between the DNA strands. Then UvrB probes one DNA strand for the presence of a lesion. If a lesion is found the UvrA subunits dissociate and the UvrB-DNA preincision complex is formed. This complex is subsequently bound by UvrC and the second UvrB is released. If no lesion is found, the DNA wraps around the other UvrB subunit that will check the other stand for damage. The polypeptide is UvrABC system protein B (Helicobacter acinonychis (strain Sheeba)).